The following is a 234-amino-acid chain: UPF0758 protein Smal_0281 (234 aa).

Residues 103-225 (VGNNPAAVGR…PVSFAERGLL (123 aa)) enclose the MPN domain. Positions 174, 176, and 187 each coordinate Zn(2+). The short motif at 174–187 (HNHPSGDPEPSSAD) is the JAMM motif element.

The protein belongs to the UPF0758 family.

The protein is UPF0758 protein Smal_0281 of Stenotrophomonas maltophilia (strain R551-3).